We begin with the raw amino-acid sequence, 213 residues long: 3-isopropylmalate dehydratase small subunit (213 aa).

It belongs to the LeuD family. LeuD type 1 subfamily. In terms of assembly, heterodimer of LeuC and LeuD.

It catalyses the reaction (2R,3S)-3-isopropylmalate = (2S)-2-isopropylmalate. The protein operates within amino-acid biosynthesis; L-leucine biosynthesis; L-leucine from 3-methyl-2-oxobutanoate: step 2/4. Catalyzes the isomerization between 2-isopropylmalate and 3-isopropylmalate, via the formation of 2-isopropylmaleate. The sequence is that of 3-isopropylmalate dehydratase small subunit from Neisseria gonorrhoeae (strain ATCC 700825 / FA 1090).